The following is a 230-amino-acid chain: LexA repressor (230 aa).

Positions L28 to R48 form a DNA-binding region, H-T-H motif. Catalysis depends on for autocatalytic cleavage activity residues S149 and K186.

This sequence belongs to the peptidase S24 family. In terms of assembly, homodimer.

The catalysed reaction is Hydrolysis of Ala-|-Gly bond in repressor LexA.. In terms of biological role, represses a number of genes involved in the response to DNA damage (SOS response), including recA and lexA. In the presence of single-stranded DNA, RecA interacts with LexA causing an autocatalytic cleavage which disrupts the DNA-binding part of LexA, leading to derepression of the SOS regulon and eventually DNA repair. The chain is LexA repressor from Sorangium cellulosum (strain So ce56) (Polyangium cellulosum (strain So ce56)).